The sequence spans 176 residues: CASP-like protein 5A1 (176 aa).

Topologically, residues 1 to 35 are cytoplasmic; sequence MNPSHPAVHPVEAPPTDVHHAPRVRMKDYQGMPGT. Residues 36–56 form a helical membrane-spanning segment; sequence LGGLALRLGQFCFAVVAFSIM. Residues 57-67 lie on the Extracellular side of the membrane; it reads LSTDDFSTVTA. The helical transmembrane segment at 68-88 threads the bilayer; the sequence is FCYLVAATVLQCLWSLALAVI. Residues 89 to 102 are Cytoplasmic-facing; that stretch reads DGYALLVKRSLRNS. A helical transmembrane segment spans residues 103 to 123; the sequence is LVVSLFVVGDGVTATLTFAAA. Residues 124–152 are Extracellular-facing; sequence CASAGITVLIGNDLRECDQNHCGKYETAT. The helical transmembrane segment at 153-173 threads the bilayer; the sequence is AMAFLSWFMVSPSFLLTFWLL. Residues 174 to 176 lie on the Cytoplasmic side of the membrane; the sequence is ASR.

This sequence belongs to the Casparian strip membrane proteins (CASP) family. As to quaternary structure, homodimer and heterodimers.

It localises to the cell membrane. The sequence is that of CASP-like protein 5A1 from Ginkgo biloba (Ginkgo).